Reading from the N-terminus, the 351-residue chain is Farnesyl pyrophosphate synthase (351 aa).

The isopentenyl diphosphate site is built by lysine 51, arginine 54, and glutamine 92. Mg(2+)-binding residues include aspartate 99 and aspartate 103. A dimethylallyl diphosphate-binding site is contributed by arginine 108. Arginine 109 is an isopentenyl diphosphate binding site. Dimethylallyl diphosphate contacts are provided by lysine 196, threonine 197, glutamine 236, lysine 253, and lysine 262.

It belongs to the FPP/GGPP synthase family. Mg(2+) serves as cofactor.

It carries out the reaction isopentenyl diphosphate + dimethylallyl diphosphate = (2E)-geranyl diphosphate + diphosphate. The catalysed reaction is isopentenyl diphosphate + (2E)-geranyl diphosphate = (2E,6E)-farnesyl diphosphate + diphosphate. The protein operates within isoprenoid biosynthesis; farnesyl diphosphate biosynthesis; farnesyl diphosphate from geranyl diphosphate and isopentenyl diphosphate: step 1/1. It functions in the pathway isoprenoid biosynthesis; geranyl diphosphate biosynthesis; geranyl diphosphate from dimethylallyl diphosphate and isopentenyl diphosphate: step 1/1. Its function is as follows. Farnesyl pyrophosphate synthase; part of the second module of ergosterol biosynthesis pathway that includes the middle steps of the pathway. ERG20 catalyzes the sequential condensation of isopentenyl pyrophosphate with dimethylallyl pyrophosphate, and then with the resultant geranylpyrophosphate to the ultimate product farnesyl pyrophosphate. The second module is carried out in the vacuole and involves the formation of farnesyl diphosphate, which is also an important intermediate in the biosynthesis of ubiquinone, dolichol, heme and prenylated proteins. Activity by the mevalonate kinase ERG12 first converts mevalonate into 5-phosphomevalonate. 5-phosphomevalonate is then further converted to 5-diphosphomevalonate by the phosphomevalonate kinase ERG8. The diphosphomevalonate decarboxylase MVD then produces isopentenyl diphosphate. The isopentenyl-diphosphate delta-isomerase IDI1 then catalyzes the 1,3-allylic rearrangement of the homoallylic substrate isopentenyl (IPP) to its highly electrophilic allylic isomer, dimethylallyl diphosphate (DMAPP). Finally the farnesyl diphosphate synthase ERG20 catalyzes the sequential condensation of isopentenyl pyrophosphate with dimethylallyl pyrophosphate, and then with the resultant geranylpyrophosphate to the ultimate product farnesyl pyrophosphate. The sequence is that of Farnesyl pyrophosphate synthase from Candida albicans (strain SC5314 / ATCC MYA-2876) (Yeast).